The sequence spans 318 residues: tRNA dimethylallyltransferase (318 aa).

Residue 13–20 (GPTAVGKT) coordinates ATP. Residue 15 to 20 (TAVGKT) participates in substrate binding. The tract at residues 38-41 (DSMQ) is interaction with substrate tRNA.

This sequence belongs to the IPP transferase family. Monomer. Mg(2+) serves as cofactor.

It catalyses the reaction adenosine(37) in tRNA + dimethylallyl diphosphate = N(6)-dimethylallyladenosine(37) in tRNA + diphosphate. Catalyzes the transfer of a dimethylallyl group onto the adenine at position 37 in tRNAs that read codons beginning with uridine, leading to the formation of N6-(dimethylallyl)adenosine (i(6)A). The chain is tRNA dimethylallyltransferase from Bacillus pumilus (strain SAFR-032).